We begin with the raw amino-acid sequence, 286 residues long: Oxidoreductase clz15 (286 aa).

Belongs to the asaB hydroxylase/desaturase family.

It functions in the pathway secondary metabolite biosynthesis. Oxidoreductase; part of the gene cluster that mediates the biosynthesis of squalestatin S1 (SQS1, also known as zaragozic acid A), a heavily oxidized fungal polyketide that offers potent cholesterol lowering activity by targeting squalene synthase (SS). SQS1 is composed of a 2,8-dioxobicyclic[3.2.1]octane-3,4,5-tricarboxyclic acid core that is connected to two lipophilic polyketide arms. These initial steps feature the priming of an unusual benzoic acid starter unit onto the highly reducing polyketide synthase clz14, followed by oxaloacetate extension and product release to generate a tricarboxylic acid containing product. The phenylalanine ammonia lyase (PAL) clz10 and the acyl-CoA ligase clz12 are involved in transforming phenylalanine into benzoyl-CoA. The citrate synthase-like protein clz17 is involved in connecting the C-alpha-carbons of the hexaketide chain and oxaloacetate to afford the tricarboxylic acid unit. The potential hydrolytic enzymes, clz11 and clz13, are in close proximity to pks2 and may participate in product release. On the other side, the tetraketide arm is synthesized by a the squalestatin tetraketide synthase clz2 and enzymatically esterified to the core in the last biosynthetic step, by the acetyltransferase clz6. The biosynthesis of the tetraketide must involve 3 rounds of chain extension. After the first and second rounds methyl-transfer occurs, and in all rounds of extension the ketoreductase and dehydratase are active. The enoyl reductase and C-MeT of clz2 are not active in the final round of extension. The acetyltransferase clz6 appears to have a broad substrate selectivity for its acyl CoA substrate, allowing the in vitro synthesis of novel squalestatins. The biosynthesis of SQS1 requires several oxidative steps likely performed by oxidoreductases clz3, clz15 and clz16. Finally, in support of the identification of the cluster as being responsible for SQS1 production, the cluster contains a gene encoding a putative squalene synthase (SS) clz20, suggesting a likely mechanism for self-resistance. The chain is Oxidoreductase clz15 from Cochliobolus lunatus (Filamentous fungus).